A 361-amino-acid polypeptide reads, in one-letter code: Aminomethyltransferase (361 aa).

It belongs to the GcvT family. In terms of assembly, the glycine cleavage system is composed of four proteins: P, T, L and H.

It catalyses the reaction N(6)-[(R)-S(8)-aminomethyldihydrolipoyl]-L-lysyl-[protein] + (6S)-5,6,7,8-tetrahydrofolate = N(6)-[(R)-dihydrolipoyl]-L-lysyl-[protein] + (6R)-5,10-methylene-5,6,7,8-tetrahydrofolate + NH4(+). The glycine cleavage system catalyzes the degradation of glycine. The sequence is that of Aminomethyltransferase from Herpetosiphon aurantiacus (strain ATCC 23779 / DSM 785 / 114-95).